A 395-amino-acid polypeptide reads, in one-letter code: Abhydrolase domain-containing protein (395 aa).

The AB hydrolase-1 domain occupies proline 117–proline 331. Active-site charge relay system residues include serine 200, aspartate 327, and histidine 356.

Belongs to the AB hydrolase superfamily. AB hydrolase 4 family.

The chain is Abhydrolase domain-containing protein (abhd) from Dictyostelium discoideum (Social amoeba).